The chain runs to 276 residues: Large ribosomal subunit protein uL2 (276 aa).

The interval 219-276 is disordered; the sequence is TVRGSVMNPNDHPHGGGEGRAPIGRKSPMSPWGKPTLGYKTRQRNKPSDKYIVRKRKK.

It belongs to the universal ribosomal protein uL2 family. In terms of assembly, part of the 50S ribosomal subunit. Forms a bridge to the 30S subunit in the 70S ribosome.

Its function is as follows. One of the primary rRNA binding proteins. Required for association of the 30S and 50S subunits to form the 70S ribosome, for tRNA binding and peptide bond formation. It has been suggested to have peptidyltransferase activity; this is somewhat controversial. Makes several contacts with the 16S rRNA in the 70S ribosome. This Oceanobacillus iheyensis (strain DSM 14371 / CIP 107618 / JCM 11309 / KCTC 3954 / HTE831) protein is Large ribosomal subunit protein uL2.